Reading from the N-terminus, the 701-residue chain is Centrosomal protein of 83 kDa (701 aa).

Residues 1–14 (MVVSTFTDMDTFPN) are compositionally biased toward polar residues. The disordered stretch occupies residues 1–23 (MVVSTFTDMDTFPNNFPPGGDSG). Coiled-coil stretches lie at residues 40–634 (LRCE…SLIL) and 665–698 (HMQE…ELGS). S698 carries the post-translational modification Phosphoserine.

It belongs to the CEP83 family. Interacts with CEP164 and IFT20.

The protein localises to the cytoplasm. It localises to the cytoskeleton. The protein resides in the microtubule organizing center. It is found in the centrosome. Its subcellular location is the centriole. Component of the distal appendage region of the centriole involved in the initiation of primary cilium assembly. May collaborate with IFT20 in the trafficking of ciliary membrane proteins from the Golgi complex to the cilium during the initiation of primary cilium assembly. This is Centrosomal protein of 83 kDa (CEP83) from Homo sapiens (Human).